Reading from the N-terminus, the 234-residue chain is 2,3,4,5-tetrahydropyridine-2,6-dicarboxylate N-acetyltransferase (234 aa).

The protein belongs to the transferase hexapeptide repeat family. DapH subfamily.

It catalyses the reaction (S)-2,3,4,5-tetrahydrodipicolinate + acetyl-CoA + H2O = L-2-acetamido-6-oxoheptanedioate + CoA. It functions in the pathway amino-acid biosynthesis; L-lysine biosynthesis via DAP pathway; LL-2,6-diaminopimelate from (S)-tetrahydrodipicolinate (acetylase route): step 1/3. Functionally, catalyzes the transfer of an acetyl group from acetyl-CoA to tetrahydrodipicolinate. The chain is 2,3,4,5-tetrahydropyridine-2,6-dicarboxylate N-acetyltransferase from Leuconostoc citreum (strain KM20).